We begin with the raw amino-acid sequence, 407 residues long: MSGGSADYNREHGGPEGMDPDGVIESNWNEIVDNFDDMNLKESLLRGIYAYGFEKPSAIQQRAIIPCIKGYDVIAQAQSGTGKTATFAISILQQLEIEFKETQALVLAPTRELAQQIQKVILALGDYMGATCHACIGGTNVRNEMQKLQAEAPHIVVGTPGRVFDMLNRRYLSPKWIKMFVLDEADEMLSRGFKDQIYEIFQKLNTSIQVVLLSATMPTDVLEVTKKFMRDPIRILVKKEELTLEGIKQFYINVEREEWKLDTLCDLYETLTITQAVIFLNTRRKVDWLTEKMHARDFTVSALHGDMDQKERDVIMREFRSGSSRVLITTDLLARGIDVQQVSLVINYDLPTNRENYIHRIGRGGRFGRKGVAINFVTEEDKRILRDIETFYNTTVEEMPMNVADLI.

Positions 1-22 are disordered; it reads MSGGSADYNREHGGPEGMDPDG. The short motif at 33–61 is the Q motif element; sequence DNFDDMNLKESLLRGIYAYGFEKPSAIQQ. The region spanning 64–235 is the Helicase ATP-binding domain; sequence IIPCIKGYDV…KKFMRDPIRI (172 aa). 77–84 lines the ATP pocket; the sequence is AQSGTGKT. Residue threonine 159 is modified to Phosphothreonine. Residues 183–186 carry the DEAD box motif; it reads DEAD. Positions 246-407 constitute a Helicase C-terminal domain; the sequence is GIKQFYINVE…EMPMNVADLI (162 aa).

It belongs to the DEAD box helicase family. eIF4A subfamily. As to quaternary structure, eIF4F is a multi-subunit complex, the composition of which varies with external and internal environmental conditions. It is composed of at least EIF4A, EIF4E and EIF4G1/EIFFG3. Interacts with EIF4E. May interact with NOM1.

The catalysed reaction is ATP + H2O = ADP + phosphate + H(+). Its function is as follows. ATP-dependent RNA helicase which is a subunit of the eIF4F complex involved in cap recognition and is required for mRNA binding to ribosome. In the current model of translation initiation, eIF4A unwinds RNA secondary structures in the 5'-UTR of mRNAs which is necessary to allow efficient binding of the small ribosomal subunit, and subsequent scanning for the initiator codon. The polypeptide is Eukaryotic initiation factor 4A-II (EIF4A2) (Bos taurus (Bovine)).